Reading from the N-terminus, the 457-residue chain is Subtilisin-like serine protease Pen c 2 (457 aa).

The N-terminal stretch at 1-16 (MKGFLGLALLPLLTAA) is a signal peptide. A propeptide spans 17-136 (SPVSVESIHN…IEKDSEVHHF (120 aa)) (removed in mature form). The 92-residue stretch at 43–134 (SYIVVFKKHV…DYIEKDSEVH (92 aa)) folds into the Inhibitor I9 domain. In terms of domain architecture, Peptidase S8 spans 146–457 (PWGLARISHR…YTDIVAQGGY (312 aa)). Active-site charge relay system residues include Asp-182 and His-214. Residues Asn-244 and Asn-284 are each glycosylated (N-linked (GlcNAc...) asparagine). Ser-380 serves as the catalytic Charge relay system. A glycan (N-linked (GlcNAc...) asparagine) is linked at Asn-447.

Belongs to the peptidase S8 family.

Functionally, serine protease. The polypeptide is Subtilisin-like serine protease Pen c 2 (Penicillium citrinum).